We begin with the raw amino-acid sequence, 231 residues long: Uracil-DNA glycosylase (231 aa).

Aspartate 74 functions as the Proton acceptor in the catalytic mechanism.

Belongs to the uracil-DNA glycosylase (UDG) superfamily. UNG family.

It is found in the cytoplasm. The catalysed reaction is Hydrolyzes single-stranded DNA or mismatched double-stranded DNA and polynucleotides, releasing free uracil.. Functionally, excises uracil residues from the DNA which can arise as a result of misincorporation of dUMP residues by DNA polymerase or due to deamination of cytosine. The protein is Uracil-DNA glycosylase of Campylobacter jejuni subsp. doylei (strain ATCC BAA-1458 / RM4099 / 269.97).